The sequence spans 430 residues: Adenylosuccinate synthetase (430 aa).

Residues 12 to 18 (GDEGKGK) and 40 to 42 (GHT) each bind GTP. Aspartate 13 (proton acceptor) is an active-site residue. Mg(2+) contacts are provided by aspartate 13 and glycine 40. IMP contacts are provided by residues 13-16 (DEGK), 38-41 (NAGH), threonine 128, arginine 142, glutamine 223, threonine 238, and arginine 302. Catalysis depends on histidine 41, which acts as the Proton donor. 298-304 (VNTGRKR) contributes to the substrate binding site. Residues arginine 304, 330–332 (KLD), and 412–414 (GVG) each bind GTP.

Belongs to the adenylosuccinate synthetase family. As to quaternary structure, homodimer. Requires Mg(2+) as cofactor.

The protein resides in the cytoplasm. The catalysed reaction is IMP + L-aspartate + GTP = N(6)-(1,2-dicarboxyethyl)-AMP + GDP + phosphate + 2 H(+). Its pathway is purine metabolism; AMP biosynthesis via de novo pathway; AMP from IMP: step 1/2. Its function is as follows. Plays an important role in the de novo pathway of purine nucleotide biosynthesis. Catalyzes the first committed step in the biosynthesis of AMP from IMP. This is Adenylosuccinate synthetase from Corynebacterium glutamicum (strain ATCC 13032 / DSM 20300 / JCM 1318 / BCRC 11384 / CCUG 27702 / LMG 3730 / NBRC 12168 / NCIMB 10025 / NRRL B-2784 / 534).